Reading from the N-terminus, the 858-residue chain is Bifunctional uridylyltransferase/uridylyl-removing enzyme (858 aa).

The tract at residues M1–L324 is uridylyltransferase. The segment at S325–L681 is uridylyl-removing. The HD domain occupies V443 to L565. ACT domains lie at Q682–S761 and I790–V858.

The protein belongs to the GlnD family. Mg(2+) is required as a cofactor.

The catalysed reaction is [protein-PII]-L-tyrosine + UTP = [protein-PII]-uridylyl-L-tyrosine + diphosphate. It catalyses the reaction [protein-PII]-uridylyl-L-tyrosine + H2O = [protein-PII]-L-tyrosine + UMP + H(+). Its activity is regulated as follows. Uridylyltransferase (UTase) activity is inhibited by glutamine, while glutamine activates uridylyl-removing (UR) activity. Functionally, modifies, by uridylylation and deuridylylation, the PII regulatory proteins (GlnB and homologs), in response to the nitrogen status of the cell that GlnD senses through the glutamine level. Under low glutamine levels, catalyzes the conversion of the PII proteins and UTP to PII-UMP and PPi, while under higher glutamine levels, GlnD hydrolyzes PII-UMP to PII and UMP (deuridylylation). Thus, controls uridylylation state and activity of the PII proteins, and plays an important role in the regulation of nitrogen assimilation and metabolism. The sequence is that of Bifunctional uridylyltransferase/uridylyl-removing enzyme from Burkholderia pseudomallei (strain K96243).